Reading from the N-terminus, the 239-residue chain is Isoprenyl transferase (239 aa).

Residue Asp16 is part of the active site. Asp16 provides a ligand contact to Mg(2+). Residues 17–20, Trp21, Arg29, His33, and 61–63 contribute to the substrate site; these read GNGR and STE. The active-site Proton acceptor is the Asn64. Substrate-binding positions include Trp65, Arg67, Arg187, and 193-195; that span reads RLS. Glu206 contributes to the Mg(2+) binding site.

Belongs to the UPP synthase family. As to quaternary structure, homodimer. Mg(2+) serves as cofactor.

In terms of biological role, catalyzes the condensation of isopentenyl diphosphate (IPP) with allylic pyrophosphates generating different type of terpenoids. The polypeptide is Isoprenyl transferase (Lactobacillus johnsonii (strain CNCM I-12250 / La1 / NCC 533)).